The sequence spans 273 residues: Formamidopyrimidine-DNA glycosylase (273 aa).

The active-site Schiff-base intermediate with DNA is proline 2. The active-site Proton donor is the glutamate 3. Lysine 58 functions as the Proton donor; for beta-elimination activity in the catalytic mechanism. Residues histidine 91, arginine 110, and arginine 153 each contribute to the DNA site. Residues 238–272 form an FPG-type zinc finger; the sequence is KVYGKEGQPCPRCGEDFVKIKISGRGTTYCLHCQK. The active-site Proton donor; for delta-elimination activity is arginine 262.

This sequence belongs to the FPG family. Monomer. It depends on Zn(2+) as a cofactor.

It catalyses the reaction Hydrolysis of DNA containing ring-opened 7-methylguanine residues, releasing 2,6-diamino-4-hydroxy-5-(N-methyl)formamidopyrimidine.. It carries out the reaction 2'-deoxyribonucleotide-(2'-deoxyribose 5'-phosphate)-2'-deoxyribonucleotide-DNA = a 3'-end 2'-deoxyribonucleotide-(2,3-dehydro-2,3-deoxyribose 5'-phosphate)-DNA + a 5'-end 5'-phospho-2'-deoxyribonucleoside-DNA + H(+). In terms of biological role, involved in base excision repair of DNA damaged by oxidation or by mutagenic agents. Acts as a DNA glycosylase that recognizes and removes damaged bases. Has a preference for oxidized purines, such as 7,8-dihydro-8-oxoguanine (8-oxoG). Has AP (apurinic/apyrimidinic) lyase activity and introduces nicks in the DNA strand. Cleaves the DNA backbone by beta-delta elimination to generate a single-strand break at the site of the removed base with both 3'- and 5'-phosphates. The chain is Formamidopyrimidine-DNA glycosylase from Lactobacillus delbrueckii subsp. bulgaricus (strain ATCC 11842 / DSM 20081 / BCRC 10696 / JCM 1002 / NBRC 13953 / NCIMB 11778 / NCTC 12712 / WDCM 00102 / Lb 14).